Consider the following 323-residue polypeptide: Protein translocase subunit SecF (323 aa).

6 helical membrane-spanning segments follow: residues 19 to 39 (GVIV…FKGF), 138 to 158 (ILSL…RYEW), 162 to 182 (LASV…VIVF), 189 to 209 (EVIA…IIIF), 244 to 264 (LTVF…IIGF), and 269 to 289 (LIGT…VALL).

The protein belongs to the SecD/SecF family. SecF subfamily. In terms of assembly, forms a complex with SecD. Part of the essential Sec protein translocation apparatus which comprises SecA, SecYEG and auxiliary proteins SecDF-YajC and YidC.

Its subcellular location is the cell inner membrane. In terms of biological role, part of the Sec protein translocase complex. Interacts with the SecYEG preprotein conducting channel. SecDF uses the proton motive force (PMF) to complete protein translocation after the ATP-dependent function of SecA. The polypeptide is Protein translocase subunit SecF (Helicobacter pylori (strain ATCC 700392 / 26695) (Campylobacter pylori)).